A 61-amino-acid chain; its full sequence is Small ribosomal subunit protein uS14 (61 aa).

Zn(2+)-binding residues include C24, C27, C40, and C43.

Belongs to the universal ribosomal protein uS14 family. Zinc-binding uS14 subfamily. Part of the 30S ribosomal subunit. Contacts proteins S3 and S10. Requires Zn(2+) as cofactor.

Binds 16S rRNA, required for the assembly of 30S particles and may also be responsible for determining the conformation of the 16S rRNA at the A site. The protein is Small ribosomal subunit protein uS14 of Nitratiruptor sp. (strain SB155-2).